A 527-amino-acid polypeptide reads, in one-letter code: Formate--tetrahydrofolate ligase (527 aa).

53-60 is an ATP binding site; that stretch reads TSSGEGKT.

Belongs to the formate--tetrahydrofolate ligase family.

It carries out the reaction (6S)-5,6,7,8-tetrahydrofolate + formate + ATP = (6R)-10-formyltetrahydrofolate + ADP + phosphate. It participates in one-carbon metabolism; tetrahydrofolate interconversion. In Acholeplasma laidlawii (strain PG-8A), this protein is Formate--tetrahydrofolate ligase.